Here is a 381-residue protein sequence, read N- to C-terminus: Chymosin (381 aa).

The first 16 residues, 1-16, serve as a signal peptide directing secretion; it reads MRGFVVLLAVFALSQA. A propeptide spans 17-58 (activation peptide); the sequence is SGIVRIPLHKGKSLRRALKERGLLEDFLKNHQHAVSRKHSNS. The Peptidase A1 domain occupies 74-378; sequence YFGKIYIGTP…DRASNLVGLA (305 aa). Residue D92 is part of the active site. Repeat unit 1 spans residues 92–102; it reads DTGSSDLWVPS. Cystine bridges form between C105/C110 and C265/C269. Residue D274 is part of the active site. Residues 274-284 form repeat 2; sequence DTGTSMLVGPG. Cysteines 308 and 341 form a disulfide.

This sequence belongs to the peptidase A1 family. In terms of assembly, monomer.

It carries out the reaction Broad specificity similar to that of pepsin A. Clots milk by cleavage of a single 104-Ser-Phe-|-Met-Ala-107 bond in kappa-chain of casein.. Inhibited by pepstatin. Its function is as follows. Hydrolyzes a variety of proteins. The sequence is that of Chymosin (CYM) from Callithrix jacchus (White-tufted-ear marmoset).